The primary structure comprises 63 residues: Metallothionein-like protein type 3 (63 aa).

This sequence belongs to the metallothionein superfamily. Type 15 family.

Metallothioneins have a high content of cysteine residues that bind various heavy metals. This is Metallothionein-like protein type 3 from Actinidia deliciosa (Kiwi).